A 494-amino-acid polypeptide reads, in one-letter code: Putative myristoylated protein 006R (494 aa).

Residue Gly2 is the site of N-myristoyl glycine; by host attachment. The next 3 helical transmembrane spans lie at 193-213 (VAAL…GGIA), 214-234 (VAGR…LVVW), and 465-485 (WLLY…ILAF).

This sequence belongs to the IIV-6 118L/458R family.

It is found in the membrane. The chain is Putative myristoylated protein 006R from Aedes vexans (Inland floodwater mosquito).